Consider the following 300-residue polypeptide: Bifunctional protein FolD 2 (300 aa).

NADP(+)-binding positions include 165 to 167, Ser190, and Ile231; that span reads GRS.

It belongs to the tetrahydrofolate dehydrogenase/cyclohydrolase family. In terms of assembly, homodimer.

It catalyses the reaction (6R)-5,10-methylene-5,6,7,8-tetrahydrofolate + NADP(+) = (6R)-5,10-methenyltetrahydrofolate + NADPH. It carries out the reaction (6R)-5,10-methenyltetrahydrofolate + H2O = (6R)-10-formyltetrahydrofolate + H(+). It participates in one-carbon metabolism; tetrahydrofolate interconversion. Its function is as follows. Catalyzes the oxidation of 5,10-methylenetetrahydrofolate to 5,10-methenyltetrahydrofolate and then the hydrolysis of 5,10-methenyltetrahydrofolate to 10-formyltetrahydrofolate. This is Bifunctional protein FolD 2 from Pseudomonas syringae pv. syringae (strain B728a).